A 211-amino-acid chain; its full sequence is Claudin-13 (211 aa).

The Cytoplasmic portion of the chain corresponds to M1–A8. A helical membrane pass occupies residues I9 to V29. Topologically, residues W30–R80 are extracellular. Residues V81–D101 traverse the membrane as a helical segment. Residues W102–K118 are Cytoplasmic-facing. A helical transmembrane segment spans residues V119–T139. The Extracellular segment spans residues H140–L165. The helical transmembrane segment at A166–V186 threads the bilayer. At C187 to V211 the chain is on the cytoplasmic side.

The protein belongs to the claudin family.

It is found in the cell junction. Its subcellular location is the tight junction. It localises to the cell membrane. In terms of biological role, plays a major role in tight junction-specific obliteration of the intercellular space, through calcium-independent cell-adhesion activity. The protein is Claudin-13 (Cldn13) of Mus musculus (Mouse).